Consider the following 1004-residue polypeptide: MAASQLLAAAVAAAVFLAALLVPPARCQQQQVANPGPRVRQAARIDAVRDELAAEVQAKYGFCMANVQEDFTQAFSFSNASFVSDCMEETQGQMTGMLCGKAEIEIYVKSLGKKPSTRVSRNCDQNSWALGCQPGWACARQDSSSSGREVPSRAVNCRPCYPGFFCPRGLTCMIPCPLGAYCPLATLNDTTGLCDPYSYQITPGSNTACGTADSWADVITTDDVFCPPGHHCPTTTQKFNCTEGYYCRKGSTEEHKCIWKNTCKENSTKEATALFGGILIVILSVVLLLVYNCSDQFIKIRAKILSKSRRKAATIAQESATARGRWKLAKELVLSHELEMSESDQLAASSNEARHATEGNGKRSKNRKKLAHARTERFRRAYSQIGRERVLQPDNDKITLSGVVALAAENRSRRPMFEVVFKGLTLSIGKKKLLQCVTGKLSPGRVTAIMGPSGAGKTTFLNAVLGKTTGYKKDGLVLINGKSGSMQSYKKIIGFVPQDDIVHGNLTVEENLWFSACCRSSKGMSKSDKIIVLERVIGSLGLQEIRNSLVGTVEKRGISGGQRKRVNVGIEMVMEPSLLILDEPTTGLDSASSQLLLRALRHEALQGVNVCAVIHQPSYTLFNMFDDFVLLARGGLIAYLGPISEVETYFSSLGIKVPERENPPDYYIDILEGITKTKMRGHAAPKHLPLLWMLRNGYEVPEYMQKDLEDINNVHELYTVGSMSREESFGDQSENADSVHQNVREPYSLLDRKTPGVLAQYKYYLGRVTKQRLREATLQAVDYLILCIAGICIGTIAKVKDDTFGVASYGYTIIAVSLLCQLAALRSFSPERLQYWRERESGMSTLAYFLARDTIDHFNTLVKPVAFLSTFYFFNNPRSEFKDNYLVFLALVYCVTGIGYTFAIWFELGLAQLCSALIPVVLVLVGTQPNIPNFIKGLCYPKWALEALIIAGAKKYSGVWLITRCGALLKGGYDINNFVLCIVIVMLMGVLFRFIALLSLLKLK.

Positions Met1 to Cys27 are cleaved as a signal peptide. Residues Ala271–Tyr291 traverse the membrane as a helical segment. The segment at Ser343–Ala373 is disordered. The segment covering Glu352 to Gly361 has biased composition (basic and acidic residues). Positions Lys362 to His372 are enriched in basic residues. The ABC transporter domain maps to Val419–Glu659. Gly451–Thr458 is a binding site for ATP. The next 6 helical transmembrane spans lie at Ala776–Ile796, Phe804–Ala824, Leu886–Phe906, Glu907–Thr927, Trp943–Thr963, and Phe978–Leu998.

Belongs to the ABC transporter superfamily. ABCG family. Eye pigment precursor importer (TC 3.A.1.204) subfamily.

The protein resides in the membrane. The protein is ABC transporter G family member 25 of Oryza sativa subsp. japonica (Rice).